The chain runs to 165 residues: Interferon gamma (165 aa).

Residues 1–23 (MKYTSYILAFQLCIVLGSLGCYC) form the signal peptide. Q24 is modified (pyrrolidone carboxylic acid). N-linked (GlcNAc...) asparagine glycans are attached at residues N48 and N120.

This sequence belongs to the type II (or gamma) interferon family. In terms of assembly, homodimer. Interacts with IFNGR1 (via extracellular domain); this interaction promotes IFNGR1 dimerization.

Its subcellular location is the secreted. In terms of biological role, type II interferon produced by immune cells such as T-cells and NK cells that plays crucial roles in antimicrobial, antiviral, and antitumor responses by activating effector immune cells and enhancing antigen presentation. Primarily signals through the JAK-STAT pathway after interaction with its receptor IFNGR1 to affect gene regulation. Upon IFNG binding, IFNGR1 intracellular domain opens out to allow association of downstream signaling components JAK2, JAK1 and STAT1, leading to STAT1 activation, nuclear translocation and transcription of IFNG-regulated genes. Many of the induced genes are transcription factors such as IRF1 that are able to further drive regulation of a next wave of transcription. Plays a role in class I antigen presentation pathway by inducing a replacement of catalytic proteasome subunits with immunoproteasome subunits. In turn, increases the quantity, quality, and repertoire of peptides for class I MHC loading. Increases the efficiency of peptide generation also by inducing the expression of activator PA28 that associates with the proteasome and alters its proteolytic cleavage preference. Up-regulates as well MHC II complexes on the cell surface by promoting expression of several key molecules such as cathepsins B/CTSB, H/CTSH, and L/CTSL. Participates in the regulation of hematopoietic stem cells during development and under homeostatic conditions by affecting their development, quiescence, and differentiation. In Papio anubis (Olive baboon), this protein is Interferon gamma (IFNG).